Reading from the N-terminus, the 241-residue chain is Endodeoxyribonuclease NucC (241 aa).

Catalysis depends on residues D73, E104, and K106. Mg(2+) is bound by residues D73 and E104.

Belongs to the NucC endonuclease family. In terms of assembly, self-oligomerizes. Forms homotrimers; in the presence of cAAA the trimers associate face-to-face to form homohexamers. The 2 cAAA-binding sites are on the exterior of the hexamer at the three-way junction, there are maximally 2 cyclic nucleotides per hexamer. The cofactor is Mg(2+).

Its activity is regulated as follows. Activated by cAAA and to a lesser extent cAA and cAAG; cAAA and cAA are products of its cognate CD-NTase. Cyclic nucleotide binding causes hexamerization. Cyclic nucleotide binding causes a series of shifts that enclose the cAAA molecule, enable hexamer formation and juxtapose pairs of active sites to allow dsDNA cleavage. Effector DNase of a CBASS antivirus system. CBASS (cyclic oligonucleotide-based antiphage signaling system) provides immunity against bacteriophage. The CD-NTase protein synthesizes cyclic nucleotides in response to infection; these serve as specific second messenger signals. The signals activate a diverse range of effectors, leading to bacterial cell death and thus abortive phage infection. A type III-C(AAA) CBASS system. Functionally, a cyclic nucleotide-activated dsDNase. In the presence of 3',3',3'-cyclic AMP-AMP-AMP (cAAA), and to a lesser extent 3',3',3'-cyclic AMP-AMP-GMP (cAAG) and cyclic-di-AMP (c-di-AMP), endonucleolytically degrades dsDNA. Binds one cAAA in a pocket on one surface of the trimer; cAAA binding promotes hexamerization, which is necessary for nuclease activation. Also binds c-diAMP or linear di-AMP with lower affinity. The nuclease digests dsDNA to about 50 bp lengths with a 2-base 3' overhang and a consensus recognition site of 5'-Axx|T-3'. DNA has been modeled to contact a pair of juxtaposed active sites (one from each layer of the hexamer), accounting for cleavage on both strands and the 2-base overhang. In terms of biological role, protects E.coli strain JP313 against bacteriophage lambda cI- infection. When the cdnC-cap7-cap6-nucC operon is transformed into a susceptible strain it confers bacteriophage immunity. Mutations in the sensor (Cap7 also called HORMA) or effector proteins (CdnC, NucC) but not the disassembly protein (Cap6 also called Trip13) no longer confer immunity. The presence of the intact operon leads to culture collapse and cell death which occurs before the phage has finished its replication cycle, thus protecting non-infected bacteria by aborting the phage infection and preventing its propagation. This chain is Endodeoxyribonuclease NucC, found in Escherichia coli (strain MS 115-1).